The primary structure comprises 771 residues: Probable cation-transporting ATPase G (771 aa).

The region spanning 19-86 (GRMRVQATGF…AIIDAETVPA (68 aa)) is the HMA domain. The helical transmembrane segment at 72–92 (AAILSAIIDAETVPAAAVPAY) threads the bilayer. A disordered region spans residues 122–143 (DVAAQPSGETSDACCDGEDNED). Transmembrane regions (helical) follow at residues 163–183 (VLLT…VVLG), 209–229 (VGVG…GELG), 330–350 (VFAG…ATAA), 387–407 (MIAA…LVWI), and 411–431 (LVVL…VTVV). Asp462 functions as the 4-aspartylphosphate intermediate in the catalytic mechanism. Positions 651 and 655 each coordinate Mg(2+). A run of 2 helical transmembrane segments spans residues 657–677 (PALA…DVAI) and 716–736 (IITV…AVVL).

The protein belongs to the cation transport ATPase (P-type) (TC 3.A.3) family. Type IB subfamily.

It is found in the cell membrane. The catalysed reaction is ATP + H2O = ADP + phosphate + H(+). The chain is Probable cation-transporting ATPase G (ctpG) from Mycobacterium bovis (strain ATCC BAA-935 / AF2122/97).